A 128-amino-acid polypeptide reads, in one-letter code: Large ribosomal subunit protein eL22 (128 aa).

T62 is subject to Phosphothreonine. S66 carries the phosphoserine modification. Position 69 is an N6-succinyllysine (K69).

The protein belongs to the eukaryotic ribosomal protein eL22 family. In terms of assembly, component of the large ribosomal subunit.

Its subcellular location is the cytoplasm. Its function is as follows. Component of the large ribosomal subunit. The ribosome is a large ribonucleoprotein complex responsible for the synthesis of proteins in the cell. This chain is Large ribosomal subunit protein eL22 (RPL22), found in Oryctolagus cuniculus (Rabbit).